The chain runs to 330 residues: MSKAPVRVAVTGAAGQIGYSLLFRIASGEMLGKDQPVILQLLDLPQAQKAVKGVMMELEDCAFPLLAGMIATDDPNVAFKDAKVALLVGARPRGPGMERKDLLTENAKIFTVQGAAIGQYADPDCKVLVVGNPCNTNAYIAKEVAQKYGRVPAKNFTGMLRLDHNRALSQLAGKSGREVSSLKNLVVWGNHSPTMYADYRFVKSNGDSVKDLINDAAWNKDVFLPTVGKRGAAIIEARGLSSAASAANAAIDHIRDWVLGSNGEWVTMGIPSDGSYGIPEGVIYGFPVTTENGEYKIVQGLEIDEFSRERMTVTLNELLEEREGVKDLLA.

12-18 (GAAGQIG) is a binding site for NAD(+). Positions 93 and 99 each coordinate substrate. NAD(+) is bound by residues Asn-106, Gln-113, and 130 to 132 (VGN). Asn-132 and Arg-166 together coordinate substrate. Catalysis depends on His-191, which acts as the Proton acceptor.

This sequence belongs to the LDH/MDH superfamily. MDH type 2 family.

The enzyme catalyses (S)-malate + NAD(+) = oxaloacetate + NADH + H(+). In terms of biological role, catalyzes the reversible oxidation of malate to oxaloacetate. This chain is Malate dehydrogenase, found in Azoarcus sp. (strain BH72).